Here is a 489-residue protein sequence, read N- to C-terminus: mRNA cleavage and polyadenylation factor CLP1 (489 aa).

ATP-binding positions include Glu-28 and Tyr-152–Thr-157.

It belongs to the Clp1 family. Clp1 subfamily. Component of a pre-mRNA cleavage factor complex. Interacts directly with PCF11.

It is found in the nucleus. In terms of biological role, required for endonucleolytic cleavage during polyadenylation-dependent pre-mRNA 3'-end formation. The polypeptide is mRNA cleavage and polyadenylation factor CLP1 (Candida albicans (strain SC5314 / ATCC MYA-2876) (Yeast)).